Reading from the N-terminus, the 201-residue chain is UPF0301 protein Mvan_6057 (201 aa).

It belongs to the UPF0301 (AlgH) family.

The sequence is that of UPF0301 protein Mvan_6057 from Mycolicibacterium vanbaalenii (strain DSM 7251 / JCM 13017 / BCRC 16820 / KCTC 9966 / NRRL B-24157 / PYR-1) (Mycobacterium vanbaalenii).